A 68-amino-acid polypeptide reads, in one-letter code: MEKFVEKMLGQALRQYGRNVAIDPLSPYEKQSLKAALQERRNEEPDEDLHAHIEDIIYDYVTNQGLFS.

This is an uncharacterized protein from Bacillus subtilis (strain 168).